Reading from the N-terminus, the 265-residue chain is S-adenosylmethionine decarboxylase proenzyme (265 aa).

The active-site Schiff-base intermediate with substrate; via pyruvic acid is the Ser114. Position 114 is a pyruvic acid (Ser); by autocatalysis (Ser114). Residue His119 is the Proton acceptor; for processing activity of the active site. Cys142 functions as the Proton donor; for catalytic activity in the catalytic mechanism.

The protein belongs to the prokaryotic AdoMetDC family. Type 2 subfamily. As to quaternary structure, heterooctamer of four alpha and four beta chains arranged as a tetramer of alpha/beta heterodimers. The cofactor is pyruvate. Post-translationally, is synthesized initially as an inactive proenzyme. Formation of the active enzyme involves a self-maturation process in which the active site pyruvoyl group is generated from an internal serine residue via an autocatalytic post-translational modification. Two non-identical subunits are generated from the proenzyme in this reaction, and the pyruvate is formed at the N-terminus of the alpha chain, which is derived from the carboxyl end of the proenzyme. The post-translation cleavage follows an unusual pathway, termed non-hydrolytic serinolysis, in which the side chain hydroxyl group of the serine supplies its oxygen atom to form the C-terminus of the beta chain, while the remainder of the serine residue undergoes an oxidative deamination to produce ammonia and the pyruvoyl group blocking the N-terminus of the alpha chain.

It carries out the reaction S-adenosyl-L-methionine + H(+) = S-adenosyl 3-(methylsulfanyl)propylamine + CO2. Its pathway is amine and polyamine biosynthesis; S-adenosylmethioninamine biosynthesis; S-adenosylmethioninamine from S-adenosyl-L-methionine: step 1/1. Functionally, catalyzes the decarboxylation of S-adenosylmethionine to S-adenosylmethioninamine (dcAdoMet), the propylamine donor required for the synthesis of the polyamines spermine and spermidine from the diamine putrescine. This chain is S-adenosylmethionine decarboxylase proenzyme, found in Buchnera aphidicola subsp. Acyrthosiphon pisum (strain APS) (Acyrthosiphon pisum symbiotic bacterium).